A 427-amino-acid chain; its full sequence is Serine hydroxymethyltransferase (427 aa).

(6S)-5,6,7,8-tetrahydrofolate-binding positions include leucine 117 and 121–123 (GHL). N6-(pyridoxal phosphate)lysine is present on lysine 226.

Belongs to the SHMT family. As to quaternary structure, homodimer. Requires pyridoxal 5'-phosphate as cofactor.

Its subcellular location is the cytoplasm. The catalysed reaction is (6R)-5,10-methylene-5,6,7,8-tetrahydrofolate + glycine + H2O = (6S)-5,6,7,8-tetrahydrofolate + L-serine. The enzyme catalyses L-threonine = acetaldehyde + glycine. It catalyses the reaction L-allo-threonine = acetaldehyde + glycine. It functions in the pathway one-carbon metabolism; tetrahydrofolate interconversion. Its pathway is amino-acid biosynthesis; glycine biosynthesis; glycine from L-serine: step 1/1. Functionally, its primary function is to catalyze the reversible interconversion of serine and glycine with tetrahydrofolate (THF) serving as the one-carbon carrier. This reaction serves as the major source of one-carbon groups required for the biosynthesis of purines, thymidylate, methionine, and other important biomolecules. Also exhibits THF-independent aldolase activity toward beta-hydroxyamino acids, producing glycine and aldehydes, via a retro-aldol mechanism. Thus, is able to catalyze the cleavage of L-threonine, L-allo-threonine, L-threo-beta-phenylserine and L-erythro-beta-phenylserine. This second activity is likely to be physiological in H.thermophilus, which is an organism that lacks the ortholog gene for the 'real' threonine aldolase characterized in mesophilic bacteria (LtaE), yeast and plants. The protein is Serine hydroxymethyltransferase of Hydrogenobacter thermophilus (strain DSM 6534 / IAM 12695 / TK-6).